The primary structure comprises 436 residues: MYQSRRRRRRRWGRRILSRYKRKWGRRSRRGHGIYRRWRRWRRRPRTVVTEQHSRRVKTIIVRGWEPLGNICPTDSARAKATPYASYDSDSGQGQWHGTWGHHWFTFQSLVDRAEARLNSFSGNWESYDYLRFLGGTMYFMQPREMCFMFGNDPYLMTSDLDKTASQKNRAEETWITPGYLMHRPGTHLILSRQKVERRSMYKIRVPVPTSWRGWFPIPDCFSYVLCHWYWTWWDPDACFFDPCATGSSCEAEPWWSTAQTKQAWVDRTKLDDPPVGGTGPNQKTWAPFLPSRPCTNYYTHSASFWFKYKLKFQVTGENIWAPVPRDYSQRGTVPTAPSRQQVESEARAPYPKTNRPPTTADILPGDLDSDGILEDEAYERITRDNPCPKRPRPLGIRWWDGTPGRTLQEQQQAAVLRPKPRRQLLRRLRDVLLQL.

Residues 326 to 370 form a disordered region; the sequence is RDYSQRGTVPTAPSRQQVESEARAPYPKTNRPPTTADILPGDLDS. Residues 330–344 show a composition bias toward polar residues; it reads QRGTVPTAPSRQQVE.

This sequence belongs to the anelloviridae capsid protein family.

The protein localises to the virion. Self-assembles to form an icosahedral capsid with a T=1 symmetry, about 30 nm in diameter, and consisting of 60 capsid proteins. The capsid encapsulates the genomic DNA. Capsid protein is involved in attachment and entry into the host cell. The protein is Capsid protein of Torque teno felis virus (isolate Fc-TTV4).